The chain runs to 385 residues: S-adenosylmethionine synthase (385 aa).

His-15 contacts ATP. Asp-17 serves as a coordination point for Mg(2+). Residue Glu-43 participates in K(+) binding. Residues Glu-56 and Gln-99 each contribute to the L-methionine site. The segment at 99-109 (QSPEIAQGVDE) is flexible loop. Residues 164–166 (DAK), 230–231 (RF), Asp-239, 245–246 (RK), Ala-262, and Lys-266 contribute to the ATP site. Residue Asp-239 participates in L-methionine binding. Position 270 (Lys-270) interacts with L-methionine.

This sequence belongs to the AdoMet synthase family. Homotetramer; dimer of dimers. Mg(2+) serves as cofactor. Requires K(+) as cofactor.

The protein resides in the cytoplasm. The enzyme catalyses L-methionine + ATP + H2O = S-adenosyl-L-methionine + phosphate + diphosphate. The protein operates within amino-acid biosynthesis; S-adenosyl-L-methionine biosynthesis; S-adenosyl-L-methionine from L-methionine: step 1/1. Its function is as follows. Catalyzes the formation of S-adenosylmethionine (AdoMet) from methionine and ATP. The overall synthetic reaction is composed of two sequential steps, AdoMet formation and the subsequent tripolyphosphate hydrolysis which occurs prior to release of AdoMet from the enzyme. This Hydrogenovibrio crunogenus (strain DSM 25203 / XCL-2) (Thiomicrospira crunogena) protein is S-adenosylmethionine synthase.